The primary structure comprises 111 residues: Prostatic steroid-binding protein C1 (111 aa).

Positions 1-23 (MSTIKLSLCLLIMLAVCCYEANA) are cleaved as a signal peptide.

It belongs to the secretoglobin family. Lipophilin subfamily. Prostatein is composed of three different peptides called C1, C2 and C3. These form covalent C1:C3 (F) and C2:C3 (S) heterodimers whose noncovalent association forms tetrameric (C1:C3/C3:C2) prostatein molecules.

The protein resides in the secreted. Part of prostatein which is the major secretory glycoprotein of ventral prostate gland. The sequence is that of Prostatic steroid-binding protein C1 (Psbpc1) from Rattus norvegicus (Rat).